The following is a 425-amino-acid chain: Inner membrane protein YqcE (425 aa).

The Cytoplasmic segment spans residues 1–8 (MQHNSYRR). Residues 9-29 (WITLAIISFSGGVSFDLAYLR) traverse the membrane as a helical segment. Topologically, residues 30 to 48 (YIYQIPMAKFMGFSNTEIG) are periplasmic. Residues 49–69 (LIMSTFGIAAIILYAPSGVIA) form a helical membrane-spanning segment. At 70 to 75 (DKFSHR) the chain is on the cytoplasmic side. The next 2 membrane-spanning stretches (helical) occupy residues 76–96 (KMIT…ATYP) and 97–117 (PLWV…LMLW). At 118 to 138 (SVSIKAASLLGDHSEQGKIMG) the chain is on the cytoplasmic side. The helical transmembrane segment at 139 to 159 (WMEGLRGVGVMSLAVFTMWVF) threads the bilayer. At 160-171 (SRFAPDDSTSLK) the chain is on the periplasmic side. A helical membrane pass occupies residues 172–192 (TVIIIYSVVYILLGILCWFFV). Residues 193-219 (SDNNNLRSANNEEKQSFQLSDILAVLR) lie on the Cytoplasmic side of the membrane. A helical membrane pass occupies residues 220–240 (ISTTWYCSMVIFGVFTIYAIL). At 241-259 (SYSTNYLTEMYGMSLVAAS) the chain is on the periplasmic side. Residues 260–280 (YMGIVINKIFRALCGPLGGII) traverse the membrane as a helical segment. Residues 281–291 (TTYSKVKSPTR) are Cytoplasmic-facing. The helical transmembrane segment at 292 to 312 (VIQILSVLGLLTLTALLVTNS) threads the bilayer. Residue N313 is a topological domain, periplasmic. The chain crosses the membrane as a helical span at residues 314-334 (PQSVAMGIGLILLLGFTCYAS). Over 335 to 354 (RGLYWACPGEARTPSYIMGT) the chain is Cytoplasmic. The helical transmembrane segment at 355–375 (TVGICSVIGFLPDVFVYPIIG) threads the bilayer. At 376 to 388 (HWQDTLPAAEAYR) the chain is on the periplasmic side. Residues 389 to 409 (NMWLMGMAALGMVIVFTFLLF) form a helical membrane-spanning segment. Residues 410-425 (QKIRTADSAPAMASSK) lie on the Cytoplasmic side of the membrane.

This sequence to E.coli YihN.

It localises to the cell inner membrane. This is Inner membrane protein YqcE (yqcE) from Escherichia coli (strain K12).